Reading from the N-terminus, the 381-residue chain is Creatine kinase B-type (381 aa).

Serine 4 bears the Phosphoserine mark. One can recognise a Phosphagen kinase N-terminal domain in the interval 11-98 (KLRFPAEDEF…FDPIIEERHG (88 aa)). Threonine 35 bears the Phosphothreonine mark. Lysine 45 participates in a covalent cross-link: Glycyl lysine isopeptide (Lys-Gly) (interchain with G-Cter in ubiquitin). A creatine-binding site is contributed by valine 72. Over residues 96–110 (RHGGYQPSDEHKTDL) the composition is skewed to basic and acidic residues. The segment at 96 to 123 (RHGGYQPSDEHKTDLNPDNLQGGDDLDP) is disordered. Lysine 107 is covalently cross-linked (Glycyl lysine isopeptide (Lys-Gly) (interchain with G-Cter in ubiquitin)). Residue tyrosine 125 is modified to Phosphotyrosine. One can recognise a Phosphagen kinase C-terminal domain in the interval 125-367 (YVLSSRVRTG…KLLIEMEQRL (243 aa)). ATP is bound by residues 128–132 (SSRVR), arginine 130, arginine 132, and histidine 191. Residues 130–138 (RVRTGRSIR) are internal MTS-like signal. Serine 199 is subject to Phosphoserine. Glutamate 232 lines the creatine pocket. Arginine 236 provides a ligand contact to ATP. At tyrosine 269 the chain carries 3'-nitrotyrosine. Residue serine 285 participates in creatine binding. Position 292 (arginine 292) interacts with ATP. Serine 309 bears the Phosphoserine mark. ATP contacts are provided by residues arginine 320, 320–325 (RGTGGV), and aspartate 335. Residue threonine 322 is modified to Phosphothreonine. Residue lysine 381 forms a Glycyl lysine isopeptide (Lys-Gly) (interchain with G-Cter in ubiquitin) linkage.

Belongs to the ATP:guanido phosphotransferase family. As to quaternary structure, dimer of identical or non-identical chains, which can be either B (brain type) or M (muscle type). With MM being the major form in skeletal muscle and myocardium, MB existing in myocardium, and BB existing in many tissues, especially brain. Interacts with SLC12A6 (via C-terminus); the interaction may be required for SLC12A6 potassium-chloride cotransport activity. Ubiquitinated by the ECS(ASB9) complex, leading to its degradation by the proteasome. As to expression, expressed in hippocampus and corpus callosum (at protein level).

Its subcellular location is the cytoplasm. The protein localises to the cytosol. It localises to the mitochondrion. It is found in the cell membrane. It catalyses the reaction creatine + ATP = N-phosphocreatine + ADP + H(+). In terms of biological role, reversibly catalyzes the transfer of phosphate between ATP and various phosphogens (e.g. creatine phosphate). Creatine kinase isoenzymes play a central role in energy transduction in tissues with large, fluctuating energy demands, such as skeletal muscle, heart, brain and spermatozoa. Acts as a key regulator of adaptive thermogenesis as part of the futile creatine cycle: localizes to the mitochondria of thermogenic fat cells and acts by mediating phosphorylation of creatine to initiate a futile cycle of creatine phosphorylation and dephosphorylation. During the futile creatine cycle, creatine and N-phosphocreatine are in a futile cycle, which dissipates the high energy charge of N-phosphocreatine as heat without performing any mechanical or chemical work. The protein is Creatine kinase B-type of Mus musculus (Mouse).